The primary structure comprises 295 residues: Multistep phosphorelay regulator 1 (295 aa).

A disordered region spans residues 89 to 110; it reads KSENNQQLAANETAGAPEGTEE. Residues 97-106 are compositionally biased toward low complexity; sequence AANETAGAPE. Residues 182 to 284 enclose the HPt domain; that stretch reads EHEFSKSIVW…NDFYKDARAY (103 aa). A Phosphohistidine modification is found at His221.

Functionally, binds to the msc4 response regulator which is part of a multistep phosphorelay system that transmits oxidative stress signals to the spc1 MAPK cascade. This is Multistep phosphorelay regulator 1 (mpr1) from Schizosaccharomyces pombe (strain 972 / ATCC 24843) (Fission yeast).